A 423-amino-acid chain; its full sequence is Putative galacturan 1,4-alpha-galacturonidase C (423 aa).

The first 20 residues, 1-20 (MQLRASVLLSFLGLASVGHA), serve as a signal peptide directing secretion. 6 N-linked (GlcNAc...) asparagine glycosylation sites follow: Asn-92, Asn-98, Asn-118, Asn-156, Asn-179, and Asn-191. PbH1 repeat units lie at residues 215–236 (ATNI…AIKP) and 238–258 (SYNI…AIGS). Asp-229 serves as the catalytic Proton donor. The cysteines at positions 231 and 248 are disulfide-linked. Residues Asn-245, Asn-344, and Asn-362 are each glycosylated (N-linked (GlcNAc...) asparagine). A disulfide bond links Cys-379 and Cys-385. Asn-400 carries N-linked (GlcNAc...) asparagine glycosylation.

This sequence belongs to the glycosyl hydrolase 28 family.

It is found in the secreted. The enzyme catalyses [(1-&gt;4)-alpha-D-galacturonosyl](n) + H2O = alpha-D-galacturonate + [(1-&gt;4)-alpha-D-galacturonosyl](n-1). Specific in hydrolyzing the terminal glycosidic bond of polygalacturonic acid and oligogalacturonates. This Aspergillus niger (strain ATCC MYA-4892 / CBS 513.88 / FGSC A1513) protein is Putative galacturan 1,4-alpha-galacturonidase C (rgxC).